The sequence spans 136 residues: UPF0213 protein AHA_3736 (136 aa).

Residues 17–92 enclose the GIY-YIG domain; that stretch reads SHWFIYMVRT…KQQSKAFKEQ (76 aa). Positions 114-136 are disordered; that stretch reads QKRPRYAAAKEGSDNRECQRQVD. The segment covering 124–136 has biased composition (basic and acidic residues); the sequence is EGSDNRECQRQVD.

This sequence belongs to the UPF0213 family.

In Aeromonas hydrophila subsp. hydrophila (strain ATCC 7966 / DSM 30187 / BCRC 13018 / CCUG 14551 / JCM 1027 / KCTC 2358 / NCIMB 9240 / NCTC 8049), this protein is UPF0213 protein AHA_3736.